The chain runs to 55 residues: Photosystem II reaction center protein K (55 aa).

Positions 1–18 (MFYIHLENTFDLSSTILV) are excised as a propeptide. Residues 26-46 (IFDPIVDVMPIIPLFFFLLAF) traverse the membrane as a helical segment.

The protein belongs to the PsbK family. PSII is composed of 1 copy each of membrane proteins PsbA, PsbB, PsbC, PsbD, PsbE, PsbF, PsbH, PsbI, PsbJ, PsbK, PsbL, PsbM, PsbT, PsbX, PsbY, PsbZ, Psb30/Ycf12, at least 3 peripheral proteins of the oxygen-evolving complex and a large number of cofactors. It forms dimeric complexes.

The protein localises to the plastid. It localises to the chloroplast thylakoid membrane. One of the components of the core complex of photosystem II (PSII). PSII is a light-driven water:plastoquinone oxidoreductase that uses light energy to abstract electrons from H(2)O, generating O(2) and a proton gradient subsequently used for ATP formation. It consists of a core antenna complex that captures photons, and an electron transfer chain that converts photonic excitation into a charge separation. The chain is Photosystem II reaction center protein K from Anthoceros angustus (Hornwort).